We begin with the raw amino-acid sequence, 141 residues long: Hemoglobin subunit alpha-1/2 (141 aa).

Positions 1–141 constitute a Globin domain; sequence VLSPTDKTNV…VSTVLTSKYR (141 aa). Ser-3 is subject to Phosphoserine. Lys-7 is subject to N6-succinyllysine. Residue Thr-8 is modified to Phosphothreonine. Lys-11 carries the N6-succinyllysine modification. Lys-16 carries the N6-acetyllysine; alternate modification. Position 16 is an N6-succinyllysine; alternate (Lys-16). At Tyr-24 the chain carries Phosphotyrosine. N6-succinyllysine is present on Lys-40. Phosphoserine is present on Ser-49. His-58 provides a ligand contact to O2. A heme b-binding site is contributed by His-87. Phosphoserine is present on Ser-102. Thr-108 is modified (phosphothreonine). At Ser-124 the chain carries Phosphoserine. Phosphothreonine occurs at positions 134 and 137. A Phosphoserine modification is found at Ser-138.

It belongs to the globin family. As to quaternary structure, heterotetramer of two alpha chains and two beta chains. In terms of tissue distribution, red blood cells.

Its function is as follows. Involved in oxygen transport from the lung to the various peripheral tissues. The chain is Hemoglobin subunit alpha-1/2 from Tapirus terrestris (Lowland tapir).